The chain runs to 327 residues: Probable NAD(P)H-dependent D-xylose reductase xyl1 (327 aa).

The active-site Proton donor is the tyrosine 57. Substrate is bound at residue histidine 119. Residues 173–174, 222–231, and 278–288 contribute to the NAD(+) site; these read SN, SSLGPQSFIE, and KSNNPDRLAQN.

It belongs to the aldo/keto reductase family.

It catalyses the reaction xylitol + NAD(+) = D-xylose + NADH + H(+). The catalysed reaction is xylitol + NADP(+) = D-xylose + NADPH + H(+). Its pathway is carbohydrate metabolism; D-xylose degradation. In terms of biological role, catalyzes the initial reaction in the xylose utilization pathway by reducing D-xylose into xylitol. Xylose is a major component of hemicelluloses such as xylan. Most fungi utilize D-xylose via three enzymatic reactions, xylose reductase (XR), xylitol dehydrogenase (XDH), and xylulokinase, to form xylulose 5-phosphate, which enters pentose phosphate pathway. The protein is Probable NAD(P)H-dependent D-xylose reductase xyl1 (xyl1) of Arthroderma otae (strain ATCC MYA-4605 / CBS 113480) (Microsporum canis).